The chain runs to 232 residues: 2,3,4,5-tetrahydropyridine-2,6-dicarboxylate N-acetyltransferase (232 aa).

This sequence belongs to the transferase hexapeptide repeat family. DapH subfamily.

It catalyses the reaction (S)-2,3,4,5-tetrahydrodipicolinate + acetyl-CoA + H2O = L-2-acetamido-6-oxoheptanedioate + CoA. It functions in the pathway amino-acid biosynthesis; L-lysine biosynthesis via DAP pathway; LL-2,6-diaminopimelate from (S)-tetrahydrodipicolinate (acetylase route): step 1/3. Catalyzes the transfer of an acetyl group from acetyl-CoA to tetrahydrodipicolinate. This Streptococcus pneumoniae serotype 4 (strain ATCC BAA-334 / TIGR4) protein is 2,3,4,5-tetrahydropyridine-2,6-dicarboxylate N-acetyltransferase.